A 55-amino-acid polypeptide reads, in one-letter code: uncharacterized protein (55 aa).

2 helical membrane-spanning segments follow: residues 5–25 (LISI…MMHM) and 26–46 (LPLY…LYRL).

It is found in the cell membrane. This is an uncharacterized protein from Bacillus subtilis (strain 168).